Here is a 265-residue protein sequence, read N- to C-terminus: MFKRIREIKEKEQEELVRKISELLALERELERKLEELLREYDRKSQSVNTLNEIFKLKAITRKIEETVDYLEELNVKKEELKEKYLELKGEIKSIEILEERKKREKIKKEIAVSLQELGFMHLVKKIIPVFFMFFSFLFSESATQKALKDSINLKEDYKVLLKLIEEKLKKLEEERKKLEALQKTPLTEEEKKKLEKLIKSVEKAPADEIAPAIENLPPKLAAEILLRIKERKAGQILANMNPQKASEIMKYILERNPSFNAQVD.

The stretch at 143-205 (ATQKALKDSI…EKLIKSVEKA (63 aa)) forms a coiled coil.

This is an uncharacterized protein from Aquifex aeolicus (strain VF5).